Here is a 242-residue protein sequence, read N- to C-terminus: tRNA (guanine-N(1)-)-methyltransferase (242 aa).

Residues Gly-111 and 130–135 (IGDYVL) each bind S-adenosyl-L-methionine.

The protein belongs to the RNA methyltransferase TrmD family. In terms of assembly, homodimer.

The protein localises to the cytoplasm. The enzyme catalyses guanosine(37) in tRNA + S-adenosyl-L-methionine = N(1)-methylguanosine(37) in tRNA + S-adenosyl-L-homocysteine + H(+). In terms of biological role, specifically methylates guanosine-37 in various tRNAs. The protein is tRNA (guanine-N(1)-)-methyltransferase of Aster yellows witches'-broom phytoplasma (strain AYWB).